We begin with the raw amino-acid sequence, 471 residues long: Eremophilane O-acetyltransferase ORF8 (471 aa).

Belongs to the fumigaclavine B O-acetyltransferase family. In terms of assembly, monomer.

It participates in sesquiterpene biosynthesis. Functionally, O-acetyltransferase; part of the gene cluster that mediates the biosynthesis of PR-toxin, a bicyclic sesquiterpene belonging to the eremophilane class and acting as a mycotoxin. The first step of the pathway is catalyzed by the aristolochene synthase which performs the cyclization of trans,trans-farnesyl diphosphate (FPP) to the bicyclic sesquiterpene aristolochene. Following the formation of aristolochene, the non-oxygenated aristolochene is converted to the trioxygenated intermediate eremofortin B, via 7-epi-neopetasone. This conversion appears to involve three enzymes, a hydroxysterol oxidase-like enzyme, the quinone-oxidase prx3 that forms the quinone-type-structure in the bicyclic nucleus of aristolochene with the C8-oxo group and the C-3 hydroxyl group, and the P450 monooxygenase ORF6 that introduces the epoxide at the double bond between carbons 1 and 2. No monoxy or dioxy-intermediates have been reported to be released to the broth, so these three early oxidative reactions may be coupled together. Eremofortin B is further oxidized by another P450 monooxygenase, that introduces a second epoxide between carbons 7 and 11 prior to acetylation to eremofortin A by the acetyltransferase ORF8. The second epoxidation may be performed by a second P450 monooxygenase. After the acetylation step, eremofortin A is converted to eremofortin C and then to PR-toxin. First the conversion of eremofortin A to eremofortin C proceeds by oxidation of the side chain of the molecule at C-12 and is catalyzed by the short-chain oxidoreductase prx1. The cytochrome P450 monooxygenase ORF6 is probably also involved in this step. The primary alcohol formed at C-12 is finally oxidized by the short-chain alcohol dehydrogenase prx4 that forms PR-toxin. This Penicillium roqueforti (strain FM164) protein is Eremophilane O-acetyltransferase ORF8.